An 879-amino-acid polypeptide reads, in one-letter code: DNA replication licensing factor mcm3 (879 aa).

One can recognise an MCM domain in the interval 306–513 (VFELLSTSLA…KDRALSEHVL (208 aa)). 356–363 (GDPSTAKS) contributes to the ATP binding site. An Arginine finger motif is present at residues 488-491 (SRFD). The disordered stretch occupies residues 679-778 (RKKHKKQRLE…STLPATSREL (100 aa)). Positions 690 to 713 (GEEFDSEDDNSDDMDIEESEEEMD) are enriched in acidic residues. Positions 732 to 752 (TSQSQESGSEIGSSIAGTAGS) are enriched in low complexity. A compositionally biased stretch (polar residues) spans 754–778 (NVGTSNTQLSWPSTHSTLPATSREL).

It belongs to the MCM family. As to quaternary structure, component of the mcm2-7 complex. The complex forms a toroidal hexameric ring with the proposed subunit order mcm2-mcm6-mcm4-mcm7-mcm3-mcm5. The heterodimers of mcm4/mcm6 and mcm3/mcm5 interact with mcm2 and mcm7.

Its subcellular location is the nucleus. It carries out the reaction ATP + H2O = ADP + phosphate + H(+). In terms of biological role, acts as a component of the mcm2-7 complex (mcm complex) which is the putative replicative helicase essential for 'once per cell cycle' DNA replication initiation and elongation in eukaryotic cells. The active ATPase sites in the mcm2-7 ring are formed through the interaction surfaces of two neighboring subunits such that a critical structure of a conserved arginine finger motif is provided in trans relative to the ATP-binding site of the Walker A box of the adjacent subunit. The six ATPase active sites, however, are likely to contribute differentially to the complex helicase activity. This is DNA replication licensing factor mcm3 (mcm3) from Schizosaccharomyces pombe (strain 972 / ATCC 24843) (Fission yeast).